The following is a 207-amino-acid chain: Urease accessory protein UreE (207 aa).

The segment at 171 to 207 is disordered; that stretch reads HHGHAHSHSHSHDHDHDHDHDHQHGPGCAHGHGHDHH. Residues 180–194 are compositionally biased toward basic and acidic residues; that stretch reads HSHDHDHDHDHDHQH.

This sequence belongs to the UreE family.

The protein resides in the cytoplasm. In terms of biological role, involved in urease metallocenter assembly. Binds nickel. Probably functions as a nickel donor during metallocenter assembly. The polypeptide is Urease accessory protein UreE (Burkholderia lata (strain ATCC 17760 / DSM 23089 / LMG 22485 / NCIMB 9086 / R18194 / 383)).